The chain runs to 285 residues: Protoheme IX farnesyltransferase (285 aa).

The next 7 helical transmembrane spans lie at 16–36 (AKPKVVSLLDVVAIASYILAF), 40–60 (WYNLIPVLIGGSIAAGGSMII), 106–126 (LLANPLTAFFILLGSLVYVFV), 136–156 (WLNIVIGGFAGSAAAWAGYAA), 165–185 (SLLLGLLVFAWTPGHFWALAL), 217–237 (ILMIPFALGLMLYLNLIYVII), and 265–285 (YKFSAPYLAIVMIAAVISFIL).

This sequence belongs to the UbiA prenyltransferase family. Protoheme IX farnesyltransferase subfamily.

Its subcellular location is the cell membrane. The catalysed reaction is heme b + (2E,6E)-farnesyl diphosphate + H2O = Fe(II)-heme o + diphosphate. It functions in the pathway porphyrin-containing compound metabolism; heme O biosynthesis; heme O from protoheme: step 1/1. Its function is as follows. Converts heme B (protoheme IX) to heme O by substitution of the vinyl group on carbon 2 of heme B porphyrin ring with a hydroxyethyl farnesyl side group. This chain is Protoheme IX farnesyltransferase, found in Sulfolobus acidocaldarius (strain ATCC 33909 / DSM 639 / JCM 8929 / NBRC 15157 / NCIMB 11770).